Reading from the N-terminus, the 32-residue chain is Photosystem II reaction center protein T (32 aa).

Residues 3 to 23 form a helical membrane-spanning segment; it reads ALVYTFLLIGTLMVIFFAVFF.

This sequence belongs to the PsbT family. PSII is composed of 1 copy each of membrane proteins PsbA, PsbB, PsbC, PsbD, PsbE, PsbF, PsbH, PsbI, PsbJ, PsbK, PsbL, PsbM, PsbT, PsbX, PsbY, PsbZ, Psb30/Ycf12, at least 3 peripheral proteins of the oxygen-evolving complex and a large number of cofactors. It forms dimeric complexes.

The protein resides in the plastid. The protein localises to the chloroplast thylakoid membrane. Its function is as follows. Found at the monomer-monomer interface of the photosystem II (PS II) dimer, plays a role in assembly and dimerization of PSII. PSII is a light-driven water plastoquinone oxidoreductase, using light energy to abstract electrons from H(2)O, generating a proton gradient subsequently used for ATP formation. This is Photosystem II reaction center protein T from Trieres chinensis (Marine centric diatom).